The primary structure comprises 42 residues: Conotoxin Au11.6 (42 aa).

Cystine bridges form between Cys6–Cys20, Cys13–Cys25, Cys19–Cys30, and Cys24–Cys37.

Belongs to the conotoxin I1 superfamily. As to expression, expressed by the venom duct.

Its subcellular location is the secreted. This is Conotoxin Au11.6 from Conus aulicus (Princely cone).